Consider the following 624-residue polypeptide: Cell pattern formation-associated protein ust1 (624 aa).

2 disordered regions span residues 1–24 and 43–99; these read MSTA…APTG and RSGS…GHSS. Low complexity predominate over residues 43 to 62; that stretch reads RSGSVPASASGSAPGSASGS. Over residues 70–85 the composition is skewed to basic residues; the sequence is QHHTGHHHYSAHHTHS. The HTH APSES-type domain occupies 233 to 339; it reads RVTTTLWEDE…PNIQSFLYHP (107 aa). Residues 267–288 constitute a DNA-binding region (H-T-H motif); that stretch reads GTKLLNVCGMSRGKRDGILKNE. Residues 352–362 are compositionally biased toward low complexity; it reads AQERQAQRQRA. 3 disordered regions span residues 352–456, 474–504, and 538–624; these read AQER…QQQQ, QQAY…LNNS, and SWND…IHHE. A compositionally biased stretch (polar residues) spans 369-391; sequence PGANGTSQAPPLMRANTTPSNGD. Low complexity predominate over residues 392 to 426; the sequence is TSTFSSGLSSLGSWTGSHDQGHASAPTTAQPSPSS. The segment covering 427–451 has biased composition (polar residues); sequence MHNGATQMHMSLSNHGTASPTYAQS. Residues 571 to 587 show a composition bias toward basic and acidic residues; that stretch reads LDGDDLHSPDSSDDRLA. Gly residues predominate over residues 615-624; it reads VGNGSGIHHE.

This sequence belongs to the EFG1/PHD1/stuA family. Post-translationally, phosphorylated but is not a target of cAMP signaling.

It is found in the nucleus. Functionally, transcription factor that regulates asexual reproduction. Binds the StuA-response elements (StRE) with the consensus sequence 5'-(A/T)CGCG(T/A)N(A/C)-3' at the promoters of target genes. Regulates dimorphism, virulence, and the sporulation program. Required for mating, gall induction, and sporogenesis in maize tissue. Regulates expression of the filament-down-regulated gene UM00205 and the teliospore-specific gene ssp1. In Mycosarcoma maydis (Corn smut fungus), this protein is Cell pattern formation-associated protein ust1 (ust1).